The following is a 60-amino-acid chain: Cytotoxin 1 (60 aa).

Intrachain disulfides connect C3/C21, C14/C38, C42/C53, and C54/C59.

Belongs to the three-finger toxin family. Short-chain subfamily. Type IA cytotoxin sub-subfamily. In terms of assembly, monomer in solution; Homodimer and oligomer in the presence of negatively charged lipids forming a pore with a size ranging between 20 and 30 angstroms. Expressed by the venom gland.

It is found in the secreted. It localises to the target cell membrane. Its function is as follows. Basic protein that binds to cell membrane and depolarizes cardiomyocytes. This cytotoxin also possesses lytic activity on many other cells, including red blood cells. Interaction with sulfatides in the cell membrane induces pore formation and cell internalization and is responsible for cytotoxicity in cardiomyocytes. It targets the mitochondrial membrane and induces mitochondrial swelling and fragmentation. Inhibits protein kinases C. It binds to the integrin alpha-V/beta-3 with a moderate affinity. This is Cytotoxin 1 from Naja pallida (Red spitting cobra).